A 428-amino-acid polypeptide reads, in one-letter code: Glutamate-1-semialdehyde 2,1-aminomutase (428 aa).

Lys267 carries the N6-(pyridoxal phosphate)lysine modification.

This sequence belongs to the class-III pyridoxal-phosphate-dependent aminotransferase family. HemL subfamily. In terms of assembly, homodimer. It depends on pyridoxal 5'-phosphate as a cofactor.

It is found in the cytoplasm. The catalysed reaction is (S)-4-amino-5-oxopentanoate = 5-aminolevulinate. It participates in porphyrin-containing compound metabolism; protoporphyrin-IX biosynthesis; 5-aminolevulinate from L-glutamyl-tRNA(Glu): step 2/2. This chain is Glutamate-1-semialdehyde 2,1-aminomutase, found in Persephonella marina (strain DSM 14350 / EX-H1).